The following is a 641-amino-acid chain: Choline O-acetyltransferase (641 aa).

Ser-17 carries the post-translational modification Phosphoserine. The active-site Proton acceptor is His-335. Ser-366 carries the phosphoserine modification. Residues 413-425 (GKTF…CSPD), Ser-451, and Gln-552 contribute to the CoA site. A disordered region spans residues 615–641 (CSSRQPADSKPPTAKERARGPSQAKQS).

Belongs to the carnitine/choline acetyltransferase family.

It catalyses the reaction choline + acetyl-CoA = acetylcholine + CoA. In terms of biological role, catalyzes the reversible synthesis of acetylcholine (ACh) from acetyl CoA and choline at cholinergic synapses. This Mus musculus (Mouse) protein is Choline O-acetyltransferase (Chat).